The chain runs to 160 residues: Ribosomal RNA large subunit methyltransferase H (160 aa).

S-adenosyl-L-methionine contacts are provided by residues Leu-78, Gly-109, and 128 to 133 (LSNLTL).

The protein belongs to the RNA methyltransferase RlmH family. As to quaternary structure, homodimer.

The protein resides in the cytoplasm. It catalyses the reaction pseudouridine(1915) in 23S rRNA + S-adenosyl-L-methionine = N(3)-methylpseudouridine(1915) in 23S rRNA + S-adenosyl-L-homocysteine + H(+). In terms of biological role, specifically methylates the pseudouridine at position 1915 (m3Psi1915) in 23S rRNA. This chain is Ribosomal RNA large subunit methyltransferase H, found in Alcanivorax borkumensis (strain ATCC 700651 / DSM 11573 / NCIMB 13689 / SK2).